Consider the following 436-residue polypeptide: Mannitol-binding protein (436 aa).

An N-terminal signal peptide occupies residues 1-22; the sequence is MNDSIKACLAAACLALPLLAQG.

The protein belongs to the bacterial solute-binding protein 1 family.

The protein localises to the periplasm. In terms of biological role, binds mannitol with high affinity. This Pseudomonas aeruginosa (strain ATCC 15692 / DSM 22644 / CIP 104116 / JCM 14847 / LMG 12228 / 1C / PRS 101 / PAO1) protein is Mannitol-binding protein.